A 170-amino-acid chain; its full sequence is Protein ECM34 (170 aa).

N-linked (GlcNAc...) asparagine glycosylation is present at asparagine 45. Helical transmembrane passes span 51-71 (IWLL…GIGG) and 98-118 (TIVI…FKMY).

It belongs to the DUP/COS family.

It is found in the membrane. Functionally, may be involved in cell wall organization and biogenesis. This Saccharomyces cerevisiae (strain ATCC 204508 / S288c) (Baker's yeast) protein is Protein ECM34 (ECM34).